The sequence spans 139 residues: Ribonuclease P protein component (139 aa).

Residues Phe-116–Pro-139 are disordered.

Belongs to the RnpA family. As to quaternary structure, consists of a catalytic RNA component (M1 or rnpB) and a protein subunit.

It catalyses the reaction Endonucleolytic cleavage of RNA, removing 5'-extranucleotides from tRNA precursor.. Its function is as follows. RNaseP catalyzes the removal of the 5'-leader sequence from pre-tRNA to produce the mature 5'-terminus. It can also cleave other RNA substrates such as 4.5S RNA. The protein component plays an auxiliary but essential role in vivo by binding to the 5'-leader sequence and broadening the substrate specificity of the ribozyme. This is Ribonuclease P protein component from Chlamydia abortus (strain DSM 27085 / S26/3) (Chlamydophila abortus).